The sequence spans 358 residues: Aromatic amino acid aminotransferase (358 aa).

Lys222 is modified (N6-(pyridoxal phosphate)lysine).

The protein belongs to the class-II pyridoxal-phosphate-dependent aminotransferase family. Homodimer. Pyridoxal 5'-phosphate serves as cofactor.

It carries out the reaction an aromatic L-alpha-amino acid + 2-oxoglutarate = an aromatic oxo-acid + L-glutamate. Aminotransferase that catalyzes the conversion of aromatic amino acids and 2-oxoglutarate into corresponding aromatic oxo acids and L-glutamate. The chain is Aromatic amino acid aminotransferase from Mycobacterium sp. (strain JLS).